We begin with the raw amino-acid sequence, 2431 residues long: Nucleoprotein TPR (2431 aa).

The disordered stretch occupies residues 1–48 (MTSGGSASRSGHRGVPMTSRGFDGSRRGSLRRAGARETASEAADGAAP). The segment at 77 to 87 (AVLQQVLERPE) is sufficient for interaction with TPR. Residues 88–191 (LNKLPKSTQN…GIQSQFTRAK (104 aa)) form a necessary for interaction with HSF1 region. A coiled-coil region spans residues 98 to 444 (KLEKFLAEQQ…SATKRKGAIL (347 aa)). N6-acetyllysine is present on residues K326, K386, and K419. A Phosphoserine modification is found at S453. Positions 486–678 (EKQENKRINK…ESRQHQMQLV (193 aa)) form a coiled coil. An N6-acetyllysine mark is found at K502, K531, and K551. A necessary for association to the NPC region spans residues 511 to 587 (LKRQREEYER…LMELEEARGN (77 aa)). Phosphoserine is present on residues S596, S597, and S706. Residues 736–1246 (STEAIEAKAA…IEKLSDKVVT (511 aa)) are a coiled coil. N6-acetyllysine occurs at positions 787, 797, 822, and 829. The segment covering 989–998 (LASQSTQRTG) has biased composition (polar residues). Residues 989–1011 (LASQSTQRTGKGQPGDRDDVDDL) form a disordered region. A compositionally biased stretch (basic and acidic residues) spans 1002–1011 (PGDRDDVDDL). Position 1259 is a phosphoserine (S1259). Coiled-coil stretches lie at residues 1289 to 1494 (EVAQ…LDAK) and 1547 to 1700 (VQEM…QRDE). The segment at 1292–1394 (QVESLRYRQR…NAELSEKSGM (103 aa)) is necessary for interaction with HSF1. The segment covering 1689–1701 (EHQERHLEQRDEP) has biased composition (basic and acidic residues). A disordered region spans residues 1689-1744 (EHQERHLEQRDEPQEPTNKAPEQQRQITLKTTPASGERGIASTSDPPTANIKPTPV). Residues 1703 to 1722 (EPTNKAPEQQRQITLKTTPA) are compositionally biased toward polar residues. K1760 bears the N6-acetyllysine mark. T1762 bears the Phosphothreonine mark. Positions 1873–1898 (SSPVERPSTSTAVFGTVSATPSSSLP) are enriched in polar residues. The tract at residues 1873-2193 (SSPVERPSTS…TPGIGGMQQH (321 aa)) is disordered. Residues 1882 to 1937 (STAVFGTVSATPSSSLPKRTREEEEDSTMEAGDQVSEDTVEMPLPKKLKMVTPVGT) form a sufficient and essential for mediating its nuclear import region. Positions 1937–1951 (TEEEVMAEESTDGEA) are enriched in acidic residues. Residues 1954-1963 (QAYNQDSQDS) are compositionally biased toward polar residues. Residue S1963 is modified to Phosphoserine. Residues 1994–2005 (QSDQQTTSSQDG) are compositionally biased toward low complexity. Acidic residues-rich tracts occupy residues 2016–2057 (DSDD…EDSN) and 2067–2088 (DGYE…ETEE). Polar residues predominate over residues 2100 to 2132 (ADSQNSGEGNTSAAESSFSQEVAREQQPTSASE). 5 positions are modified to phosphoserine: S2102, S2105, S2116, S2118, and S2141. Omega-N-methylarginine is present on residues R2174 and R2179. 2 positions are modified to phosphothreonine: T2184 and T2205. The residue at position 2223 (S2223) is a Phosphoserine. R2231 is subject to Omega-N-methylarginine. The span at 2295-2312 (ESTTSDASEHASQSVPMV) shows a compositional bias: polar residues. The tract at residues 2295–2431 (ESTTSDASEH…RGGINRGNIN (137 aa)) is disordered. Low complexity predominate over residues 2313–2325 (TTSTGTLSTTNET). Residues 2327 to 2340 (AGDDGDEVFVEAES) are compositionally biased toward acidic residues. The span at 2341 to 2351 (EGISSEAGLEI) shows a compositional bias: low complexity. Acidic residues predominate over residues 2353–2367 (SQQEEEPVQASDESD). Over residues 2368-2388 (LPSTSQDPPSSSSVDTSSSQP) the composition is skewed to low complexity. Residues R2411, R2413, and R2422 each carry the asymmetric dimethylarginine modification. Gly residues predominate over residues 2420-2431 (GGRGGINRGNIN).

The protein belongs to the TPR family. Homodimer. Part of the nuclear pore complex (NPC). Associates with the XPO1/CRM1-mediated nuclear export complex, the Importin alpha/Importin beta receptor and the dynein 1 complex. Interacts (via C-terminal domain) with the KPNB1; the interaction occurs in a RanGTP-dependent manner. Interacts (via C-terminal region and phosphorylated form) with MAPK1/ERK2 (via phosphorylated form); the interaction requires dimerization of MAPK1/ERK2 and increases following EGF stimulation. Interacts with MAPK3/ERK1; the interaction increases following EGF stimulation. Interacts (via coiled coil region) with NUP153; the interaction is direct. Interacts with HSF1; the interaction increases in a stress-responsive manner and stimulates export of stress-induced HSP70 mRNA. Interacts with huntingtin/HTT; the interaction is inhibited by aggregated huntingtin/HTT forms with expanded polyglutamine stretch. Interacts with MAD1L1 (via N-terminal region), MAD2L1, and TTK; the interactions occurs in a microtubule-independent manner. Interacts (via middle region) with DYNLL1. Interacts with DCTN1, dynein, NUP153 and tubulin. Interacts with MTA1. Interacts with IFI204 (via C-terminal region). Interacts with IFI203. Interacts with ZC3HC1; this interaction mediates ZC3HC1 nuclear envelopes (NE)-association but also required for proper positioning of a substantial amount of TPR at the nuclear basket (NB). Phosphorylated. Phosphorylation occurs on serine and threonine residues (comprised in the C-terminal region) by MAPK1/ERK2 and stabilizes the interaction between these two proteins. In terms of tissue distribution, expressed in the heart, liver, kidney, spleen, lung and skeletal muscles.

It localises to the nucleus. The protein resides in the nucleus membrane. It is found in the nucleus envelope. Its subcellular location is the nuclear pore complex. The protein localises to the cytoplasm. It localises to the cytoskeleton. The protein resides in the spindle. It is found in the chromosome. Its subcellular location is the centromere. The protein localises to the kinetochore. Its function is as follows. Component of the nuclear pore complex (NPC), a complex required for the trafficking across the nuclear envelope. Functions as a scaffolding element in the nuclear phase of the NPC essential for normal nucleocytoplasmic transport of proteins and mRNAs, plays a role in the establishment of nuclear-peripheral chromatin compartmentalization in interphase, and in the mitotic spindle checkpoint signaling during mitosis. Involved in the quality control and retention of unspliced mRNAs in the nucleus; in association with NUP153, regulates the nuclear export of unspliced mRNA species bearing constitutive transport element (CTE) in a NXF1- and KHDRBS1-independent manner. Negatively regulates both the association of CTE-containing mRNA with large polyribosomes and translation initiation. Does not play any role in Rev response element (RRE)-mediated export of unspliced mRNAs. Implicated in nuclear export of mRNAs transcribed from heat shock gene promoters; associates both with chromatin in the HSP70 promoter and with mRNAs transcribed from this promoter under stress-induced conditions. Plays a limited role in the regulation of nuclear protein export. Modulates the nucleocytoplasmic transport of activated MAPK1/ERK2 and huntingtin/HTT and may serve as a docking site for the XPO1/CRM1-mediated nuclear export complex. Also plays a role as a structural and functional element of the perinuclear chromatin distribution; involved in the formation and/or maintenance of NPC-associated perinuclear heterochromatin exclusion zones (HEZs). Finally, acts as a spatial regulator of the spindle-assembly checkpoint (SAC) response ensuring a timely and effective recruitment of spindle checkpoint proteins like MAD1L1 and MAD2L1 to unattached kinetochore during the metaphase-anaphase transition before chromosome congression. Its N-terminus is involved in activation of oncogenic kinases. The chain is Nucleoprotein TPR from Mus musculus (Mouse).